The following is a 342-amino-acid chain: Endolytic peptidoglycan transglycosylase RlpA (342 aa).

Positions 1-26 (MSKRVRSSLILPAVCGLGLAAVLLSS) are cleaved as a signal peptide. The N-palmitoyl cysteine moiety is linked to residue Cys27. Cys27 carries S-diacylglycerol cysteine lipidation. In terms of domain architecture, SPOR spans 261–342 (SLPADGLYLQ…LGQPTLVRPD (82 aa)).

Belongs to the RlpA family.

The protein localises to the cell membrane. Functionally, lytic transglycosylase with a strong preference for naked glycan strands that lack stem peptides. The chain is Endolytic peptidoglycan transglycosylase RlpA from Pseudomonas aeruginosa (strain ATCC 15692 / DSM 22644 / CIP 104116 / JCM 14847 / LMG 12228 / 1C / PRS 101 / PAO1).